A 947-amino-acid chain; its full sequence is Translation initiation factor IF-2 (947 aa).

A disordered region spans residues 55–361 (TKDAQAGSAK…PVTERKFHEL (307 aa)). A compositionally biased stretch (basic and acidic residues) spans 63–73 (AKDKQVAEQKA). The span at 76-90 (AKATTPQPAAATQEA) shows a compositional bias: low complexity. Composition is skewed to basic and acidic residues over residues 103–116 (FKAE…EQAA), 125–134 (SNDRKSDYRQ), and 170–183 (NDGH…DKNR). A compositionally biased stretch (low complexity) spans 190 to 204 (RQQDTGRQGQTQAGA). Basic and acidic residues-rich tracts occupy residues 225–249 (ARQR…RQEA), 257–267 (QTEDKKHREAS), and 294–311 (NRPD…DGQK). Residues 316–334 (SWNSQNQVRNQKNSNWNNN) are compositionally biased toward low complexity. A compositionally biased stretch (basic residues) spans 335–345 (KKNKKGKHHKN). Positions 448 to 617 (ERAPVVTIMG…LLVAEVEELK (170 aa)) constitute a tr-type G domain. A G1 region spans residues 457–464 (GHVDHGKT). 457–464 (GHVDHGKT) provides a ligand contact to GTP. Residues 482–486 (GITQH) form a G2 region. The interval 503–506 (DTPG) is G3. Residues 503-507 (DTPGH) and 557-560 (NKID) contribute to the GTP site. The tract at residues 557–560 (NKID) is G4. The tract at residues 593–595 (SAK) is G5.

Belongs to the TRAFAC class translation factor GTPase superfamily. Classic translation factor GTPase family. IF-2 subfamily.

It localises to the cytoplasm. One of the essential components for the initiation of protein synthesis. Protects formylmethionyl-tRNA from spontaneous hydrolysis and promotes its binding to the 30S ribosomal subunits. Also involved in the hydrolysis of GTP during the formation of the 70S ribosomal complex. The polypeptide is Translation initiation factor IF-2 (Streptococcus equi subsp. zooepidemicus (strain MGCS10565)).